We begin with the raw amino-acid sequence, 256 residues long: Acetylglutamate kinase (256 aa).

Substrate contacts are provided by residues Gly40–Gly41, Arg62, and Asn154.

Belongs to the acetylglutamate kinase family. ArgB subfamily.

The protein resides in the cytoplasm. It carries out the reaction N-acetyl-L-glutamate + ATP = N-acetyl-L-glutamyl 5-phosphate + ADP. Its pathway is amino-acid biosynthesis; L-arginine biosynthesis; N(2)-acetyl-L-ornithine from L-glutamate: step 2/4. Its function is as follows. Catalyzes the ATP-dependent phosphorylation of N-acetyl-L-glutamate. This chain is Acetylglutamate kinase, found in Staphylococcus aureus (strain MRSA252).